Here is a 1576-residue protein sequence, read N- to C-terminus: THO complex subunit 2 (1576 aa).

2 coiled-coil regions span residues 293 to 339 (NCIM…KVEK) and 896 to 965 (HTSY…NWLL). The Nuclear localization signal signature appears at 923–928 (KKKKEK). The tract at residues 1184–1576 (NEFHHKDPPP…STHKSSDKHR (393 aa)) is disordered. Positions 1218–1234 (KSDESSTEETDKSRERS) are enriched in basic and acidic residues. S1222 is modified (phosphoserine). Low complexity predominate over residues 1251-1263 (GNSSNGNSSSNSS). 3 stretches are compositionally biased toward basic and acidic residues: residues 1265–1285 (TVKE…KEKT), 1294–1343 (ILGK…EKFK), and 1353–1383 (STQE…KGGE). A Phosphothreonine modification is found at T1385. S1390, S1393, and S1417 each carry phosphoserine. The segment covering 1416–1425 (PSPSHSSTVK) has biased composition (polar residues). T1443 is modified (phosphothreonine). Positions 1449 to 1504 (KSKEREMDKKDLDKSRERSREREKKDEKDRKERKRDHSNNDREVPPDLTKRRKEEN) are enriched in basic and acidic residues. Residues S1450, S1486, and S1516 each carry the phosphoserine modification. Positions 1464–1491 (RERSREREKKDEKDRKERKRDHSNNDRE) form a coiled coil. Residues 1524–1552 (NEKDKEKNKSKSSGKEKGGDSFKSEKMDK) are compositionally biased toward basic and acidic residues.

It belongs to the THOC2 family. Component of the THO subcomplex, which is composed of THOC1, THOC2, THOC3, THOC5, THOC6 and THOC7. The THO subcomplex interacts with DDX39B to form the THO-DDX39B complex which multimerizes into a 28-subunit tetrameric assembly. Component of the transcription/export (TREX) complex at least composed of ALYREF/THOC4, DDX39B, SARNP/CIP29, CHTOP and the THO subcomplex; in the complex interacts with THOC1, THOC3, THOC5, THOC7 and DDX39B. TREX seems to have a dynamic structure involving ATP-dependent remodeling. Interacts with POLDIP3 and ZC3H11A.

It localises to the nucleus. The protein resides in the nucleus speckle. The protein localises to the cytoplasm. Its function is as follows. Component of the THO subcomplex of the TREX complex which is thought to couple mRNA transcription, processing and nuclear export, and which specifically associates with spliced mRNA and not with unspliced pre-mRNA. Required for efficient export of polyadenylated RNA and spliced mRNA. The THOC1-THOC2-THOC3 core complex alone is sufficient to bind export factor NXF1-NXT1 and promote ATPase activity of DDX39B; in the complex THOC2 is the only component that directly interacts with DDX39B. TREX is recruited to spliced mRNAs by a transcription-independent mechanism, binds to mRNA upstream of the exon-junction complex (EJC) and is recruited in a splicing- and cap-dependent manner to a region near the 5' end of the mRNA where it functions in mRNA export to the cytoplasm via the TAP/NXF1 pathway. Required for NXF1 localization to the nuclear rim. THOC2 (and probably the THO complex) is involved in releasing mRNA from nuclear speckle domains. Plays a role for proper neuronal development. The protein is THO complex subunit 2 (THOC2) of Rhinolophus ferrumequinum (Greater horseshoe bat).